A 296-amino-acid chain; its full sequence is tRNA dimethylallyltransferase (296 aa).

ATP is bound at residue Gly9–Thr16. Thr11–Thr16 contributes to the substrate binding site. The segment at Asp34–Gln37 is interaction with substrate tRNA.

Belongs to the IPP transferase family. As to quaternary structure, monomer. It depends on Mg(2+) as a cofactor.

The enzyme catalyses adenosine(37) in tRNA + dimethylallyl diphosphate = N(6)-dimethylallyladenosine(37) in tRNA + diphosphate. In terms of biological role, catalyzes the transfer of a dimethylallyl group onto the adenine at position 37 in tRNAs that read codons beginning with uridine, leading to the formation of N6-(dimethylallyl)adenosine (i(6)A). The protein is tRNA dimethylallyltransferase of Chloroflexus aggregans (strain MD-66 / DSM 9485).